A 167-amino-acid chain; its full sequence is Nucleoside diphosphate kinase (167 aa).

ATP is bound by residues Lys-11, Arg-92, Thr-98, Arg-109, and Asn-129. The Pros-phosphohistidine intermediate role is filled by His-132.

It belongs to the NDK family. As to quaternary structure, homotetramer. Mg(2+) is required as a cofactor.

It localises to the cytoplasm. It carries out the reaction a 2'-deoxyribonucleoside 5'-diphosphate + ATP = a 2'-deoxyribonucleoside 5'-triphosphate + ADP. The enzyme catalyses a ribonucleoside 5'-diphosphate + ATP = a ribonucleoside 5'-triphosphate + ADP. Functionally, major role in the synthesis of nucleoside triphosphates other than ATP. The ATP gamma phosphate is transferred to the NDP beta phosphate via a ping-pong mechanism, using a phosphorylated active-site intermediate. This is Nucleoside diphosphate kinase (ndk) from Borreliella burgdorferi (strain ATCC 35210 / DSM 4680 / CIP 102532 / B31) (Borrelia burgdorferi).